The chain runs to 627 residues: Altered inheritance of mitochondria protein 9, mitochondrial (627 aa).

A mitochondrion-targeting transit peptide spans 1–43 (MIRYTVAGHSRRCVVGASKRVGAIKCITVAATKRFISNKPNEV).

The protein belongs to the AIM9 family.

It is found in the mitochondrion. The polypeptide is Altered inheritance of mitochondria protein 9, mitochondrial (AIM9) (Saccharomyces cerevisiae (strain RM11-1a) (Baker's yeast)).